A 237-amino-acid chain; its full sequence is uncharacterized protein (237 aa).

The 206-residue stretch at 13–218 (VVGLSGGVAT…KSWKPYIFRV (206 aa)) folds into the DPCK domain. 18 to 25 (GGVATGKS) lines the ATP pocket.

This sequence belongs to the CoaE family.

This is an uncharacterized protein from Caenorhabditis elegans.